The chain runs to 263 residues: ATP synthase subunit a (263 aa).

A propeptide spans Met1–Asn14 (removed in mature form). 6 consecutive transmembrane segments (helical) span residues Phe35–Met57, Val95–Ser117, Val129–His151, Phe156–Leu178, Leu191–Met213, and Ile228–Ile250.

It belongs to the ATPase A chain family. In terms of assembly, F-type ATPases have 2 components, CF(1) - the catalytic core - and CF(0) - the membrane proton channel. In yeast, the dimeric form of ATP synthase consists of 18 polypeptides: alpha, beta, gamma, delta, epsilon, 4 (B), 5 (OSCP), 6 (A), 8, 9 (C), d, E (Tim11), f, g, h, i, j and k.

The protein localises to the mitochondrion inner membrane. Mitochondrial membrane ATP synthase (F(1)F(0) ATP synthase or Complex V) produces ATP from ADP in the presence of a proton gradient across the membrane which is generated by electron transport complexes of the respiratory chain. F-type ATPases consist of two structural domains, F(1) - containing the extramembraneous catalytic core and F(0) - containing the membrane proton channel, linked together by a central stalk and a peripheral stalk. During catalysis, ATP synthesis in the catalytic domain of F(1) is coupled via a rotary mechanism of the central stalk subunits to proton translocation. Key component of the proton channel; it may play a direct role in the translocation of protons across the membrane. The protein is ATP synthase subunit a (ATP6) of Eremothecium gossypii (strain ATCC 10895 / CBS 109.51 / FGSC 9923 / NRRL Y-1056) (Yeast).